The following is a 214-amino-acid chain: Probable transaldolase (214 aa).

The active-site Schiff-base intermediate with substrate is K83.

The protein belongs to the transaldolase family. Type 3B subfamily.

The protein localises to the cytoplasm. It catalyses the reaction D-sedoheptulose 7-phosphate + D-glyceraldehyde 3-phosphate = D-erythrose 4-phosphate + beta-D-fructose 6-phosphate. The protein operates within carbohydrate degradation; pentose phosphate pathway; D-glyceraldehyde 3-phosphate and beta-D-fructose 6-phosphate from D-ribose 5-phosphate and D-xylulose 5-phosphate (non-oxidative stage): step 2/3. Transaldolase is important for the balance of metabolites in the pentose-phosphate pathway. This chain is Probable transaldolase, found in Streptococcus equi subsp. equi (strain 4047).